A 588-amino-acid polypeptide reads, in one-letter code: Probable basic-leucine zipper transcription factor M (588 aa).

Residues 127–157 (QVEQQQEQEQEQEQQQKQQQQQYIEKQIQEI) are a coiled coil. Positions 221–240 (QQNHIDNQSLNNSNTKTSKN) are enriched in low complexity. Positions 221–250 (QQNHIDNQSLNNSNTKTSKNQQKDNNLPKK) are disordered. Positions 263–326 (NNNNIEKKRD…GSNLMRPEPE (64 aa)) constitute a bZIP domain. Residues 269–289 (KKRDQTESSKNFREKKKEYVK) are basic motif. Positions 291 to 312 (IESKILALTLENDKLKKENDSL) are leucine-zipper.

Belongs to the bZIP family.

It is found in the nucleus. In terms of biological role, probable transcriptional regulator. In Dictyostelium discoideum (Social amoeba), this protein is Probable basic-leucine zipper transcription factor M (bzpM).